Reading from the N-terminus, the 131-residue chain is Small ribosomal subunit protein uS11 (131 aa).

The protein belongs to the universal ribosomal protein uS11 family. As to quaternary structure, part of the 30S ribosomal subunit.

Located on the platform of the 30S subunit. This chain is Small ribosomal subunit protein uS11, found in Haloquadratum walsbyi (strain DSM 16790 / HBSQ001).